Here is a 269-residue protein sequence, read N- to C-terminus: Trans-aconitate 2-methyltransferase (269 aa).

It belongs to the methyltransferase superfamily. Tam family.

It localises to the cytoplasm. It carries out the reaction trans-aconitate + S-adenosyl-L-methionine = (E)-3-(methoxycarbonyl)pent-2-enedioate + S-adenosyl-L-homocysteine. In terms of biological role, catalyzes the S-adenosylmethionine monomethyl esterification of trans-aconitate. This is Trans-aconitate 2-methyltransferase from Streptomyces avermitilis (strain ATCC 31267 / DSM 46492 / JCM 5070 / NBRC 14893 / NCIMB 12804 / NRRL 8165 / MA-4680).